Consider the following 484-residue polypeptide: PTS system N-acetylmuramic acid-specific EIIBC component (484 aa).

Positions 1 to 89 (MAKITSNTVS…NQLIDSLTSG (89 aa)) constitute a PTS EIIB type-1 domain. Catalysis depends on cysteine 28, which acts as the Phosphocysteine intermediate; for EIIB activity. One can recognise a PTS EIIC type-1 domain in the interval 125–484 (SKFATIFTPL…FFGCKDVDLS (360 aa)). 10 helical membrane passes run 127–147 (FATI…LLGF), 168–188 (LIAY…ILIG), 194–214 (AFGG…LGYN), 228–248 (FFGF…AAII), 266–286 (MILT…LIIM), 310–330 (AAIL…QGFV), 345–365 (LFPI…ALYF), 379–399 (GAII…VTLP), 409–429 (IGGA…LPVG), and 451–471 (IFPG…VGFL).

The protein localises to the cell inner membrane. It catalyses the reaction N-acetyl-beta-D-muramate(out) + N(pros)-phospho-L-histidyl-[protein] = N-acetyl-beta-D-muramate 6-phosphate(in) + L-histidyl-[protein]. Functionally, the phosphoenolpyruvate-dependent sugar phosphotransferase system (sugar PTS), a major carbohydrate active transport system, catalyzes the phosphorylation of incoming sugar substrates concomitantly with their translocation across the cell membrane. This system is involved in N-acetylmuramic acid (MurNAc) transport, yielding cytoplasmic MurNAc-6-P. Is also able to take up anhydro-N-acetylmuramic acid (anhMurNAc), but cannot phosphorylate the carbon 6, probably because of the 1,6-anhydro ring. This Vibrio parahaemolyticus serotype O3:K6 (strain RIMD 2210633) protein is PTS system N-acetylmuramic acid-specific EIIBC component (murP).